The chain runs to 1159 residues: Anillin-like protein 1 (1159 aa).

Disordered regions lie at residues 43–81 (VASP…MKEN), 266–327 (QQVS…TKTT), 409–430 (KLKK…APVP), 549–608 (AIPK…GDVI), and 629–699 (FGFM…KSSS). Residues 50–60 (FGSSSKCNDGP) are compositionally biased toward polar residues. Positions 287 to 327 (ASSATSSSSSTTTLTTISGASGSTTSGISNAPQDSASTKTT) are enriched in low complexity. The segment covering 421–430 (PPAPTSAPVP) has biased composition (pro residues). Residues 564–584 (SASSLYSQGARSNTASPASKS) show a composition bias toward polar residues. The segment covering 660–684 (VIEEETENEDESEPYEPEEEEDDDA) has biased composition (acidic residues). One can recognise a PH domain in the interval 1029-1147 (DITYHGFLSM…WLSLINSTSK (119 aa)).

As to expression, strongly expressed in dividing neuroblasts under the ventral epidermal cells during ventral enclosure.

The protein resides in the cytoplasm. The protein localises to the cell cortex. Its subcellular location is the cytoskeleton. It localises to the spindle. It is found in the midbody. The protein resides in the cleavage furrow. In terms of biological role, required for contractile events in embryos that occur prior to mitosis, such as cortical ruffling and pseudocleavage. Promotes membrane ruffling by organizing cortical patches of septins and myosin II. Not generally required for cytokinesis in mitotic cells. Required for the asymmetric cleavage events that extrude the two polar bodies during oocyte meiosis. Not required for meiotic contractile ring assembly, initiation or closure but is required for the transformation of the contractile ring from a disk above the spindle to a tube around the spindle midzone. Promotes astral microtubule-directed cortical myosin polarization and cleavage furrow ingression. Regulates neuroblast cytokinesis during mid- to late-embryogenesis and is required for ventral enclosure. In Caenorhabditis elegans, this protein is Anillin-like protein 1 (ani-1).